Reading from the N-terminus, the 90-residue chain is Small ribosomal subunit protein uS15c (90 aa).

Belongs to the universal ribosomal protein uS15 family. Part of the 30S ribosomal subunit.

The protein localises to the plastid. Its subcellular location is the chloroplast. This Buxus microphylla (Littleleaf boxwood) protein is Small ribosomal subunit protein uS15c (rps15).